The chain runs to 335 residues: Pyridoxal 5'-phosphate synthase subunit PdxS (335 aa).

Asp30 is a binding site for D-ribose 5-phosphate. The Schiff-base intermediate with D-ribose 5-phosphate role is filled by Lys87. Position 159 (Gly159) interacts with D-ribose 5-phosphate. Arg171 is a binding site for D-glyceraldehyde 3-phosphate. Residues Gly257 and 278 to 279 (GS) contribute to the D-ribose 5-phosphate site.

It belongs to the PdxS/SNZ family. In terms of assembly, in the presence of PdxT, forms a dodecamer of heterodimers.

The enzyme catalyses aldehydo-D-ribose 5-phosphate + D-glyceraldehyde 3-phosphate + L-glutamine = pyridoxal 5'-phosphate + L-glutamate + phosphate + 3 H2O + H(+). It functions in the pathway cofactor biosynthesis; pyridoxal 5'-phosphate biosynthesis. Functionally, catalyzes the formation of pyridoxal 5'-phosphate from ribose 5-phosphate (RBP), glyceraldehyde 3-phosphate (G3P) and ammonia. The ammonia is provided by the PdxT subunit. Can also use ribulose 5-phosphate and dihydroxyacetone phosphate as substrates, resulting from enzyme-catalyzed isomerization of RBP and G3P, respectively. The protein is Pyridoxal 5'-phosphate synthase subunit PdxS of Thermococcus onnurineus (strain NA1).